We begin with the raw amino-acid sequence, 475 residues long: BICD family-like cargo adapter 2 (475 aa).

A coiled-coil region spans residues 56-275 (ELGKALLERN…LKELQDELHM (220 aa)). Composition is skewed to polar residues over residues 286-300 (HSSLHSEIQQSTAVQ) and 308-318 (SAETQSITSGY). The disordered stretch occupies residues 286–318 (HSSLHSEIQQSTAVQNHEKGRNSAETQSITSGY). Positions 340 to 413 (RLQDQVTMQH…ESLNLQLLST (74 aa)) form a coiled coil. A compositionally biased stretch (low complexity) spans 440–450 (QSQKQQETQKP). Residues 440–459 (QSQKQQETQKPPESPQNSFL) form a disordered region.

The protein belongs to the BICDR family.

The polypeptide is BICD family-like cargo adapter 2 (bicdl2) (Xenopus tropicalis (Western clawed frog)).